Here is a 365-residue protein sequence, read N- to C-terminus: tRNA(Met) cytidine acetate ligase (365 aa).

Residues 7–20 (IAEF…HKYL), Gly96, Asn152, and Arg175 contribute to the ATP site.

It belongs to the TmcAL family.

The protein resides in the cytoplasm. It catalyses the reaction cytidine(34) in elongator tRNA(Met) + acetate + ATP = N(4)-acetylcytidine(34) in elongator tRNA(Met) + AMP + diphosphate. Its function is as follows. Catalyzes the formation of N(4)-acetylcytidine (ac(4)C) at the wobble position of elongator tRNA(Met), using acetate and ATP as substrates. First activates an acetate ion to form acetyladenylate (Ac-AMP) and then transfers the acetyl group to tRNA to form ac(4)C34. This chain is tRNA(Met) cytidine acetate ligase, found in Streptococcus pneumoniae (strain 70585).